A 3033-amino-acid chain; its full sequence is Genome polyprotein (3033 aa).

N-acetylserine; by host is present on Ser2. The segment at 2–23 (STNPKPQRKTKRNTNRRPQDVK) is interaction with STAT1. Positions 2–58 (STNPKPQRKTKRNTNRRPQDVKFPGGGQIVGGVYLLPRRGPRLGVRATRKTSERSQP) are interaction with EIF2AK2/PKR. The tract at residues 2-59 (STNPKPQRKTKRNTNRRPQDVKFPGGGQIVGGVYLLPRRGPRLGVRATRKTSERSQPR) is interaction with DDX3X. The disordered stretch occupies residues 2 to 75 (STNPKPQRKT…PKDRRSTGKS (74 aa)). Short sequence motifs (nuclear localization signal) lie at residues 5 to 13 (PKPQRKTKR) and 38 to 43 (PRRGPR). Residues 7 to 16 (PQRKTKRNTN) are compositionally biased toward basic residues. Low complexity predominate over residues 32–47 (GGVYLLPRRGPRLGVR). Position 53 is a phosphoserine; by host (Ser53). Short sequence motifs (nuclear localization signal) lie at residues 58–64 (PRGRRQP) and 66–71 (PKDRRS). Phosphoserine; by host is present on residues Ser99 and Ser116. The important for endoplasmic reticulum and mitochondrial localization stretch occupies residues 112-152 (PRHRSRNLGRVIDTITCGFADLMGYIPVVGAPVGGVARALA). The tract at residues 122-173 (VIDTITCGFADLMGYIPVVGAPVGGVARALAHGVRVLEDGINYATRNLPGCS) is interaction with APOA2. The important for lipid droplets localization stretch occupies residues 164 to 167 (YATR). The propeptide at 178–191 (LLALLSCVTVPVSS) is ER anchor for the core protein, removed in mature form by host signal peptidase. Residues 190–358 (SSVEIRNIST…FGGHWGVVFG (169 aa)) are Lumenal-facing. N-linked (GlcNAc...) asparagine; by host glycosylation is found at Asn196 and Asn209. The tract at residues 265-296 (IVMAATVCSALYVGDVCGAVMIVSQALIVSPE) is important for fusion. N-linked (GlcNAc...) asparagine; by host glycosylation is present at Asn305. Residues 359–379 (LAYFSMQGAWAKVIAILLLVA) form a helical membrane-spanning segment. Residues 380 to 729 (GVDATTYSTG…WEWVVLLFLL (350 aa)) are Lumenal-facing. Positions 385-412 (TYSTGATVGRTVGSFAGLFKLGAQQNVQ) are HVR1. 3 N-linked (GlcNAc...) (high mannose) asparagine; by host glycosylation sites follow: Asn417, Asn423, and Asn430. Cystine bridges form between Cys429–Cys554, Cys452–Cys459, Cys488–Cys496, and Cys505–Cys510. An N-linked (GlcNAc...) asparagine; by host glycan is attached at Asn448. The tract at residues 475-480 (ETNVTN) is HVR2. An N-linked (GlcNAc...) asparagine; by host glycan is attached at Asn477. The interval 482–495 (EDMRPYCWHYPPKP) is CD81-binding 1. Asn534 carries an N-linked (GlcNAc...) asparagine; by host glycan. The segment at 546–553 (PPRGAWFG) is CD81-binding 2. Asn558 carries N-linked (GlcNAc...) asparagine; by host glycosylation. 4 disulfides stabilise this stretch: Cys566/Cys571, Cys585/Cys589, Cys601/Cys624, and Cys611/Cys648. N-linked (GlcNAc...) (high mannose) asparagine; by host glycans are attached at residues Asn627 and Asn649. A disulfide bridge connects residues Cys656 and Cys681. A PKR/eIF2-alpha phosphorylation homology domain (PePHD) region spans residues 664-675 (GQQSPLLHSTTE). A helical membrane pass occupies residues 730–750 (LADARICACLWMLIILGQAEA). Topologically, residues 751–761 (ALEKLIILHSA) are lumenal. Residues 762 to 782 (SAASANGPLWFFIFFTAAWYL) traverse the membrane as a helical segment. The Cytoplasmic portion of the chain corresponds to 783 to 786 (KGRV). The chain crosses the membrane as a helical span at residues 787-807 (VPAATYSVLGLWSFLLLVLAL). The Lumenal portion of the chain corresponds to 808–817 (PQQAYALDAA). A helical membrane pass occupies residues 818–838 (EQGELGLVILMIISIFTLTPA). The Cytoplasmic segment spans residues 839–885 (YKILLSRSVWWLSYMLVLAEAQVQQWVPPLEARGGRDGIIWVAVILH). Residues 886–906 (PHLVFEVTKWLLAILGSAYLL) form a helical membrane-spanning segment. Residues 907–932 (KASLLRVPYFVRAHALLRVCTLVRHL) are Lumenal-facing. In terms of domain architecture, Peptidase C18 spans 907–1030 (KASLLRVPYF…GYTSKGWKLL (124 aa)). A protease NS2-3 region spans residues 908–1210 (ASLLRVPYFV…PVESLDIARR (303 aa)). Cys926 is lipidated: S-palmitoyl cysteine; by host. A helical membrane pass occupies residues 933-953 (AGARYIQMLLITMGRWTGTYI). The tract at residues 933–953 (AGARYIQMLLITMGRWTGTYI) is interaction with host SCPS1. Residues 954–1661 (YDHLSPLSTW…CMQADLEVMT (708 aa)) are Cytoplasmic-facing. Catalysis depends on for protease NS2 activity; shared with dimeric partner residues His956, Glu976, and Cys997. Positions 1031-1212 (APITAYTQQT…ESLDIARRTP (182 aa)) constitute a Peptidase S29 domain. Residues His1087 and Asp1111 each act as charge relay system; for serine protease NS3 activity in the active site. The Zn(2+) site is built by Cys1127 and Cys1129. Catalysis depends on Ser1169, which acts as the Charge relay system; for serine protease NS3 activity. Zn(2+)-binding residues include Cys1175 and His1179. A Helicase ATP-binding domain is found at 1221 to 1373 (PAVPQTYQVG…ANIEEVALGH (153 aa)). Residue 1234 to 1241 (APTGSGKS) coordinates ATP. Mg(2+)-binding residues include Ser1241 and Glu1321. Positions 1320–1323 (DECH) match the DECH box motif. The tract at residues 1490 to 1502 (QRRGRTGRGRLGT) is RNA-binding. The helical transmembrane segment at 1662 to 1682 (STWVLAGGVLAAVAAYCLATG) threads the bilayer. The NS3-binding stretch occupies residues 1683–1694 (CISIIGRIHLND). At 1683–1809 (CISIIGRIHL…ALTSPLPTST (127 aa)) the chain is on the cytoplasmic side. The helical transmembrane segment at 1810–1830 (TILLNIMGGWLASQIAPPAGA) threads the bilayer. The Lumenal portion of the chain corresponds to 1831 to 1832 (TG). Residues 1833 to 1853 (FVVSGLVGAAVGSIGLGKILV) form a helical membrane-spanning segment. Position 1854 (Asp1854) is a topological domain, cytoplasmic. Residues 1855 to 1875 (VLAGYGAGISGALVAFKIMSG) traverse the membrane as a helical segment. Over 1876 to 1885 (EKPSVEDVVN) the chain is Lumenal. The helical transmembrane segment at 1886–1906 (LLPAILSPGALVVGVICAAIL) threads the bilayer. Residues 1907–1976 (RRHVGQGEGA…WITEDCPVPC (70 aa)) lie on the Cytoplasmic side of the membrane. Cys1976 carries S-palmitoyl cysteine; by host lipidation. Residues 1977-2007 (SGSWLRDIWEWVCSILTDFKNWLSAKLLPKM) lie within the membrane without spanning it. Residues 2008-3012 (PGLPFISCQK…FHSVSHARPR (1005 aa)) are Cytoplasmic-facing. Zn(2+) is bound by residues Cys2015, Cys2033, Cys2035, and Cys2056. The interval 2124-2212 (EFFSWVDGVQ…ASSSASQLSA (89 aa)) is FKBP8-binding. The interval 2124–2332 (EFFSWVDGVQ…PVPPPRRRRA (209 aa)) is transcriptional activation. The tract at residues 2139 to 2143 (PTPGP) is interaction with non-structural protein 4A. The segment at 2192–2213 (RRLARGSPPSQASSSASQLSAP) is disordered. The tract at residues 2193–2460 (RLARGSPPSQ…ALITPCGPEE (268 aa)) is interaction with host SKP2. Phosphoserine; by host is present on residues Ser2198, Ser2201, Ser2205, Ser2208, Ser2211, and Ser2214. Residues 2198–2213 (SPPSQASSSASQLSAP) show a composition bias toward low complexity. The tract at residues 2214-2249 (SLKATCTTHKTAYDCDMVDANLFMGGDVTRIESDSK) is ISDR. The segment at 2214-2275 (SLKATCTTHK…REPSVPSEYL (62 aa)) is interaction with EIF2AK2/PKR. The tract at residues 2249–2306 (KVIVLDSLDSMTEVEDDREPSVPSEYLTRRRKFPPALPPWARPDYNPPVIETWKRPDY) is NS4B-binding. The tract at residues 2299-2377 (ETWKRPDYEP…DTGGDSVQQP (79 aa)) is V3. Positions 2322–2325 (APVP) match the SH3-binding motif. The Nuclear localization signal motif lies at 2327 to 2335 (PRRRRARVL). Residue Lys2350 forms a Glycyl lysine isopeptide (Lys-Gly) (interchain with G-Cter in ubiquitin) linkage. Residues 2354–2431 (PLQDTNDSGH…IDSDSKSWST (78 aa)) form a disordered region. Over residues 2355–2391 (LQDTNDSGHSTGADTGGDSVQQPSGETAASDAGSLSS) the composition is skewed to polar residues. Residues Ser2471 and Ser2484 each carry the phosphoserine; by host modification. Positions 2656–2774 (PMGFSYDTRC…ISESQGNEED (119 aa)) constitute a RdRp catalytic domain. Asp2662, Asp2760, and Asp2761 together coordinate Mg(2+). Residues 3013 to 3033 (LLLLCLLLLSVGVGIFLLPAR) form a helical membrane-spanning segment.

The protein belongs to the hepacivirus polyprotein family. As to quaternary structure, homooligomer. Interacts with E1 (via C-terminus). Interacts with the non-structural protein 5A. Interacts (via N-terminus) with host STAT1 (via SH2 domain); this interaction results in decreased STAT1 phosphorylation and ubiquitin-mediated proteasome-dependent STAT1 degradation, leading to decreased IFN-stimulated gene transcription. Interacts with host STAT3; this interaction constitutively activates STAT3. Interacts with host LTBR receptor. Interacts with host TNFRSF1A receptor and possibly induces apoptosis. Interacts with host HNRPK. Interacts with host YWHAE. Interacts with host UBE3A/E6AP. Interacts with host DDX3X. Interacts with host APOA2. Interacts with host RXRA protein. Interacts with host SP110 isoform 3/Sp110b; this interaction sequesters the transcriptional corepressor SP110 away from the nucleus. Interacts with host CREB3 nuclear transcription protein; this interaction triggers cell transformation. Interacts with host ACY3. Interacts with host C1QR1. Interacts with host RBM24; this interaction, which enhances the interaction of the mature core protein with 5'-UTR, may inhibit viral translation and favor replication. Interacts with host EIF2AK2/PKR; this interaction induces the autophosphorylation of EIF2AK2. Part of the viral assembly initiation complex composed of NS2, E1, E2, NS3, NS4A, NS5A and the mature core protein. Forms a heterodimer with envelope glycoprotein E2. Interacts with mature core protein. Interacts with protease NS2. The heterodimer E1/E2 interacts with host CLDN1; this interaction plays a role in viral entry into host cell. Interacts with host SPSB2 (via C-terminus). Part of the viral assembly initiation complex composed of NS2, E1, E2, NS3, NS4A, NS5A and the mature core protein. Interacts with host NEURL3; this interaction prevents E1 binding to glycoprotein E2. In terms of assembly, forms a heterodimer with envelope glycoprotein E1. Interacts with host CD81 and SCARB1 receptors; these interactions play a role in viral entry into host cell. Interacts with host EIF2AK2/PKR; this interaction inhibits EIF2AK2 and probably allows the virus to evade the innate immune response. Interacts with host CD209/DC-SIGN and CLEC4M/DC-SIGNR. Interact with host SPCS1; this interaction is essential for viral particle assembly. Interacts with protease NS2. The heterodimer E1/E2 interacts with host CLDN1; this interaction plays a role in viral entry into host cell. Part of the viral assembly initiation complex composed of NS2, E1, E2, NS3, NS4A, NS5A and the mature core protein. Interacts with host SLC3A2/4F2hc; the interaction may facilitate viral entry into host cell. Interacts with human PLSCR1. As to quaternary structure, homohexamer. Homoheptamer. Interacts with protease NS2. Homodimer. Interacts with host SPCS1; this interaction is essential for viral particle assembly. Interacts with envelope glycoprotein E1. Interacts with envelope glycoprotein E2. Interacts with viroporin p7. Interacts with serine protease/helicase NS3. Part of the replication complex composed of NS2, NS3, NS4A, NS4B, NS5A and the RNA-directed RNA polymerase embedded in an ER-derived membranous web. Part of the viral assembly initiation complex composed of NS2, E1, E2, NS3, NS4A, NS5A and the mature core protein. In terms of assembly, interacts with protease NS2. Interacts with non-structural protein 4A; this interaction stabilizes the folding of NS3 serine protease. NS3-NS4A interaction is essential for NS3 activation and allows membrane anchorage of the latter. NS3/NS4A complex also prevents phosphorylation of host IRF3, thus preventing the establishment of dsRNA induced antiviral state. Interacts with host MAVS; this interaction leads to the cleavage and inhibition of host MAVS. Interacts with host TICAM1; this interaction leads to the cleavage and inhibition of host TICAM1. Interacts with host TANK-binding kinase/TBK1; this interaction results in the inhibition of the association between TBK1 and IRF3, which leads to the inhibition of IRF3 activation. Interacts with host RBM24. Part of the replication complex composed of NS2, NS3, NS4A, NS4B, NS5A and the RNA-directed RNA polymerase embedded in an ER-derived membranous web. Part of the viral assembly initiation complex composed of NS2, E1, E2, NS3, NS4A, NS5A and the mature core protein. As to quaternary structure, interacts with NS3 serine protease; this interaction stabilizes the folding of NS3 serine protease. NS3-NS4A interaction is essential for NS3 activation and allows membrane anchorage of the latter. Interacts with non-structural protein 5A (via N-terminus). Part of the replication complex composed of NS2, NS3, NS4A, NS4B, NS5A and the RNA-directed RNA polymerase embedded in an ER-derived membranous web. Part of the viral assembly initiation complex composed of NS2, E1, E2, NS3, NS4A, NS5A and the mature core protein. Homomultimer. Interacts with non-structural protein NS5A. Interacts with host PLA2G4C; this interaction likely initiates the recruitment of replication complexes to lipid droplets. Interacts with host STING; this interaction disrupts the interaction between STING and TBK1 thereby suppressing the interferon signaling. Part of the replication complex composed of NS2, NS3, NS4A, NS4B, NS5A and the RNA-directed RNA polymerase embedded in an ER-derived membranous web. In terms of assembly, monomer. Homodimer; dimerization is required for RNA-binding. Interacts with the mature core protein. Interacts (via N-terminus) with non-structural protein 4A. Interacts with non-structural protein 4B. Interacts (via region D2) with RNA-directed RNA polymerase. Part of the viral assembly initiation complex composed of NS2, E1, E2, NS3, NS4A, NS5A and the mature core protein. Part of the replication complex composed of NS2, NS3, NS4A, NS4B, NS5A and the RNA-directed RNA polymerase embedded in an ER-derived membranous web. Interacts with host GRB2. Interacts with host BIN1. Interacts with host PIK3R1. Interacts with host SRCAP. Interacts with host FKBP8. Interacts (via C-terminus) with host VAPB (via MSP domain). Interacts with host EIF2AK2/PKR; this interaction leads to disruption of EIF2AK2 dimerization by NS5A and probably allows the virus to evade the innate immune response. Interacts (via N-terminus) with host PACSIN2 (via N-terminus); this interaction attenuates protein kinase C alpha-mediated phosphorylation of PACSIN2 by disrupting the interaction between PACSIN2 and PRKCA. Interacts (via N-terminus) with host SRC kinase (via SH2 domain). Interacts with most Src-family kinases. Interacts with host IFI27 and SKP2; promotes the ubiquitin-mediated proteasomal degradation of NS5A. Interacts with host GPS2. Interacts with host TNFRSF21; this interaction allows the modulation by the virus of JNK, p38 MAPK, STAT3, and Akt signaling pathways in a DR6-dependent manner. Interacts (via N-terminus) with host CIDEB (via N-terminus); this interaction seems to regulate the association of HCV particles with APOE. Interacts with host CHKA/Choline Kinase-alpha; CHKA bridges host PI4KA and NS5A and potentiates NS5A-stimulated PI4KA activity, which then facilitates the targeting of the ternary complex to the ER for viral replication. Interacts with host SPSB2 (via C-terminus); this interaction targets NS5A for ubiquitination and degradation. Interacts with host RAB18; this interaction may promote the association of NS5A and other replicase components with lipid droplets. Interacts (via region D2) with host PPIA/CYPA; the interaction stimulates RNA-binding ability of NS5A and is dependent on the peptidyl-prolyl cis-trans isomerase activity of PPIA/CYPA. Interacts with host TRIM14; this interaction induces the degradation of NS5A. As to quaternary structure, homooligomer. Interacts with non-structural protein 5A. Interacts with host VAPB. Interacts with host PRK2/PKN2. Interacts with host HNRNPA1 and SEPT6; these interactions facilitate viral replication. Part of the replication complex composed of NS2, NS3, NS4A, NS4B, NS5A and the RNA-directed RNA polymerase. Requires Zn(2+) as cofactor. Mg(2+) is required as a cofactor. Post-translationally, specific enzymatic cleavages in vivo yield mature proteins. The structural proteins, core, E1, E2 and p7 are produced by proteolytic processing by host signal peptidases. The core protein precursor is synthesized as a 23 kDa, which is retained in the ER membrane through the hydrophobic signal peptide. Cleavage by the signal peptidase releases the 21 kDa mature core protein. The cleavage of the core protein precursor occurs between aminoacids 176 and 188 but the exact cleavage site is not known. Some degraded forms of the core protein appear as well during the course of infection. The other proteins (p7, NS2, NS3, NS4A, NS4B, NS5A and NS5B) are cleaved by the viral proteases. Autoprocessing between NS2 and NS3 is mediated by the NS2 cysteine protease catalytic domain and regulated by the NS3 N-terminal domain. Phosphorylated by host PKC and PKA. In terms of processing, ubiquitinated; mediated by UBE3A and leading to core protein subsequent proteasomal degradation. Post-translationally, highly N-glycosylated. Palmitoylation is required for NS2/3 autoprocessing and E2 recruitment to membranes. In terms of processing, palmitoylated. This modification may play a role in its polymerization or in protein-protein interactions. Post-translationally, phosphorylated on serines in a basal form termed p56. p58 is a hyperphosphorylated form of p56. p56 and p58 coexist in the cell in roughly equivalent amounts. Hyperphosphorylation is dependent on the presence of NS4A. Host CSNK1A1/CKI-alpha or RPS6KB1 kinases may be responsible for NS5A phosphorylation. Tyrosine phosphorylation is essential for the interaction with host SRC. In terms of processing, ubiquitinated. Ubiquitination, most probably at Lys-2350, mediated by host IFI27 and SKP2 leads to proteasomal degradation, restricting viral infection. Ubiquitination by host TRIM22 leads to interruption of viral replication. Post-translationally, the N-terminus is phosphorylated by host PRK2/PKN2.

Its subcellular location is the host endoplasmic reticulum membrane. The protein localises to the host mitochondrion membrane. It is found in the virion. It localises to the host cytoplasm. The protein resides in the host nucleus. Its subcellular location is the host lipid droplet. The protein localises to the virion membrane. It is found in the host mitochondrion. It localises to the host cell membrane. The protein resides in the host perinuclear region. It carries out the reaction Hydrolysis of four peptide bonds in the viral precursor polyprotein, commonly with Asp or Glu in the P6 position, Cys or Thr in P1 and Ser or Ala in P1'.. The enzyme catalyses a ribonucleoside 5'-triphosphate + H2O = a ribonucleoside 5'-diphosphate + phosphate + H(+). The catalysed reaction is ATP + H2O = ADP + phosphate + H(+). It catalyses the reaction RNA(n) + a ribonucleoside 5'-triphosphate = RNA(n+1) + diphosphate. Its activity is regulated as follows. Inhibited by the antiviral drug hexamethylene amiloride. Inhibition by amantadine appears to be genotype-dependent. Also inhibited by long-alkyl-chain iminosugar derivatives. Activity is up-regulated by PRK2/PKN2-mediated phosphorylation. Functionally, packages viral RNA to form a viral nucleocapsid, and promotes virion budding. Participates in the viral particle production as a result of its interaction with the non-structural protein 5A. Binds RNA and may function as a RNA chaperone to induce the RNA structural rearrangements taking place during virus replication. Modulates viral translation initiation by interacting with viral IRES and 40S ribosomal subunit. Affects various cell signaling pathways, host immunity and lipid metabolism. Prevents the establishment of cellular antiviral state by blocking the interferon-alpha/beta (IFN-alpha/beta) and IFN-gamma signaling pathways and by blocking the formation of phosphorylated STAT1 and promoting ubiquitin-mediated proteasome-dependent degradation of STAT1. Activates STAT3 leading to cellular transformation. Regulates the activity of cellular genes, including c-myc and c-fos. May repress the promoter of p53, and sequester CREB3 and SP110 isoform 3/Sp110b in the cytoplasm. Represses cell cycle negative regulating factor CDKN1A, thereby interrupting an important check point of normal cell cycle regulation. Targets transcription factors involved in the regulation of inflammatory responses and in the immune response: suppresses TNF-induced NF-kappa-B activation, and activates AP-1. Binds to dendritic cells (DCs) via C1QR1, resulting in down-regulation of T-lymphocytes proliferation. Alters lipid metabolism by interacting with hepatocellular proteins involved in lipid accumulation and storage. Induces up-regulation of FAS promoter activity, and thereby contributes to the increased triglyceride accumulation in hepatocytes (steatosis). In terms of biological role, forms a heterodimer with envelope glycoprotein E2, which mediates virus attachment to the host cell, virion internalization through clathrin-dependent endocytosis and fusion with host membrane. Fusion with the host cell is most likely mediated by both E1 and E2, through conformational rearrangements of the heterodimer required for fusion rather than a classical class II fusion mechanism. E1/E2 heterodimer binds host apolipoproteins such as APOB and ApoE thereby forming a lipo-viro-particle (LVP). APOE associated to the LVP allows the initial virus attachment to cell surface receptors such as the heparan sulfate proteoglycans (HSPGs), syndecan-1 (SDC1), syndecan-1 (SDC2), the low-density lipoprotein receptor (LDLR) and scavenger receptor class B type I (SCARB1). The cholesterol transfer activity of SCARB1 allows E2 exposure and binding of E2 to SCARB1 and the tetraspanin CD81. E1/E2 heterodimer binding on CD81 activates the epithelial growth factor receptor (EGFR) signaling pathway. Diffusion of the complex E1-E2-EGFR-SCARB1-CD81 to the cell lateral membrane allows further interaction with Claudin 1 (CLDN1) and occludin (OCLN) to finally trigger HCV entry. Forms a heterodimer with envelope glycoprotein E1, which mediates virus attachment to the host cell, virion internalization through clathrin-dependent endocytosis and fusion with host membrane. Fusion with the host cell is most likely mediated by both E1 and E2, through conformational rearrangements of the heterodimer required for fusion rather than a classical class II fusion mechanism. The interaction between envelope glycoprotein E2 and host apolipoprotein E/APOE allows the proper assembly, maturation and infectivity of the viral particles. This interaction is probably promoted via the up-regulation of cellular autophagy by the virus. E1/E2 heterodimer binds host apolipoproteins such as APOB and APOE thereby forming a lipo-viro-particle (LVP). APOE associated to the LVP allows the initial virus attachment to cell surface receptors such as the heparan sulfate proteoglycans (HSPGs), syndecan-1 (SDC1), syndecan-1 (SDC2), the low-density lipoprotein receptor (LDLR) and scavenger receptor class B type I (SCARB1). The cholesterol transfer activity of SCARB1 allows E2 exposure and binding of E2 to SCARB1 and the tetraspanin CD81. E1/E2 heterodimer binding on CD81 activates the epithelial growth factor receptor (EGFR) signaling pathway. Diffusion of the complex E1-E2-EGFR-SCARB1-CD81 to the cell lateral membrane allows further interaction with Claudin 1 (CLDN1) and occludin (OCLN) to finally trigger HCV entry. Inhibits host EIF2AK2/PKR activation, preventing the establishment of an antiviral state. Viral ligand for CD209/DC-SIGN and CLEC4M/DC-SIGNR, which are respectively found on dendritic cells (DCs), and on liver sinusoidal endothelial cells and macrophage-like cells of lymph node sinuses. These interactions allow the capture of circulating HCV particles by these cells and subsequent facilitated transmission to permissive cells such as hepatocytes and lymphocyte subpopulations. The interaction between E2 and host amino acid transporter complex formed by SLC3A2 and SLC7A5/LAT1 may facilitate viral entry into host cell. Its function is as follows. Ion channel protein that acts as a viroporin and plays an essential role in the assembly, envelopment and secretion of viral particles. Regulates the host cell secretory pathway, which induces the intracellular retention of viral glycoproteins and favors assembly of viral particles. Creates a pore in acidic organelles and releases Ca(2+) and H(+) in the cytoplasm of infected cells, leading to a productive viral infection. High levels of cytoplasmic Ca(2+) may trigger membrane trafficking and transport of viral ER-associated proteins to viroplasms, sites of viral genome replication. This ionic imbalance induces the assembly of the inflammasome complex, which triggers the maturation of pro-IL-1beta into IL-1beta through the action of caspase-1. Targets also host mitochondria and induces mitochondrial depolarization. In addition of its role as a viroporin, acts as a lipid raft adhesion factor. Functionally, cysteine protease required for the proteolytic auto-cleavage between the non-structural proteins NS2 and NS3. The N-terminus of NS3 is required for the function of NS2 protease (active region NS2-3). Promotes the initiation of viral particle assembly by mediating the interaction between structural and non-structural proteins. In terms of biological role, displays three enzymatic activities: serine protease with a chymotrypsin-like fold, NTPase and RNA helicase. NS3 serine protease, in association with NS4A, is responsible for the cleavages of NS3-NS4A, NS4A-NS4B, NS4B-NS5A and NS5A-NS5B. The NS3/NS4A complex prevents phosphorylation of host IRF3, thus preventing the establishment of dsRNA induced antiviral state. The NS3/NS4A complex induces host amino acid transporter component SLC3A2, thus contributing to HCV propagation. NS3 RNA helicase binds to RNA and unwinds both dsDNA and dsRNA in the 3' to 5' direction, and likely resolves RNA complicated stable secondary structures in the template strand. Binds a single ATP and catalyzes the unzipping of a single base pair of dsRNA. Inhibits host antiviral proteins TBK1 and IRF3 thereby preventing the establishment of an antiviral state. Cleaves host MAVS/CARDIF thereby preventing the establishment of an antiviral state. Cleaves host TICAM1/TRIF, thereby disrupting TLR3 signaling and preventing the establishment of an antiviral state. Induces a specific membrane alteration that serves as a scaffold for the virus replication complex. This membrane alteration gives rise to the so-called ER-derived membranous web that contains the replication complex. NS4B self-interaction contributes to its function in membranous web formation. Promotes host TRIF protein degradation in a CASP8-dependent manner thereby inhibiting host TLR3-mediated interferon signaling. Disrupts the interaction between STING and TBK1 contributing to the inhibition of interferon signaling. Its function is as follows. Phosphorylated protein that is indispensable for viral replication and assembly. Both hypo- and hyperphosphorylated states are required for the viral life cycle. The hyperphosphorylated form of NS5A is an inhibitor of viral replication. Involved in RNA-binding and especially in binding to the viral genome. Zinc is essential for RNA-binding. Participates in the viral particle production as a result of its interaction with the mature viral core protein. Its interaction with host VAPB may target the viral replication complex to vesicles. Down-regulates viral IRES translation initiation. Mediates interferon resistance, presumably by interacting with and inhibiting host EIF2AK2/PKR. Prevents BIN1-induced apoptosis. Acts as a transcriptional activator of some host genes important for viral replication when localized in the nucleus. Via the interaction with host PACSIN2, modulates lipid droplet formation in order to promote virion assembly. Modulates TNFRSF21/DR6 signaling pathway for viral propagation. Functionally, RNA-dependent RNA polymerase that performs primer-template recognition and RNA synthesis during viral replication. Initiates RNA transcription/replication at a flavin adenine dinucleotide (FAD), resulting in a 5'- FAD cap on viral RNAs. In this way, recognition of viral 5' RNA by host pattern recognition receptors can be bypassed, thereby evading activation of antiviral pathways. The protein is Genome polyprotein of Hepatitis C virus genotype 2b (isolate JPUT971017) (HCV).